A 434-amino-acid chain; its full sequence is Nicotinate phosphoribosyltransferase (434 aa).

Residue H242 is modified to Phosphohistidine; by autocatalysis.

Belongs to the NAPRTase family. Post-translationally, transiently phosphorylated on a His residue during the reaction cycle. Phosphorylation strongly increases the affinity for substrates and increases the rate of nicotinate D-ribonucleotide production. Dephosphorylation regenerates the low-affinity form of the enzyme, leading to product release.

The catalysed reaction is nicotinate + 5-phospho-alpha-D-ribose 1-diphosphate + ATP + H2O = nicotinate beta-D-ribonucleotide + ADP + phosphate + diphosphate. It functions in the pathway cofactor biosynthesis; NAD(+) biosynthesis; nicotinate D-ribonucleotide from nicotinate: step 1/1. Catalyzes the synthesis of beta-nicotinate D-ribonucleotide from nicotinate and 5-phospho-D-ribose 1-phosphate at the expense of ATP. The protein is Nicotinate phosphoribosyltransferase of Rhizobium etli (strain CIAT 652).